Consider the following 379-residue polypeptide: Lipoyl synthase, mitochondrial (379 aa).

The [4Fe-4S] cluster site is built by Cys94, Cys99, Cys105, Cys126, Cys130, Cys133, and Ser342. One can recognise a Radical SAM core domain in the interval 109-331; sequence GEDNGAATAT…EKEAMSMGFL (223 aa).

Belongs to the radical SAM superfamily. Lipoyl synthase family. It depends on [4Fe-4S] cluster as a cofactor.

It localises to the mitochondrion. It carries out the reaction [[Fe-S] cluster scaffold protein carrying a second [4Fe-4S](2+) cluster] + N(6)-octanoyl-L-lysyl-[protein] + 2 oxidized [2Fe-2S]-[ferredoxin] + 2 S-adenosyl-L-methionine + 4 H(+) = [[Fe-S] cluster scaffold protein] + N(6)-[(R)-dihydrolipoyl]-L-lysyl-[protein] + 4 Fe(3+) + 2 hydrogen sulfide + 2 5'-deoxyadenosine + 2 L-methionine + 2 reduced [2Fe-2S]-[ferredoxin]. The protein operates within protein modification; protein lipoylation via endogenous pathway; protein N(6)-(lipoyl)lysine from octanoyl-[acyl-carrier-protein]: step 2/2. Its function is as follows. Catalyzes the radical-mediated insertion of two sulfur atoms into the C-6 and C-8 positions of the octanoyl moiety bound to the lipoyl domains of lipoate-dependent enzymes, thereby converting the octanoylated domains into lipoylated derivatives. This is Lipoyl synthase, mitochondrial from Leishmania braziliensis.